Here is an 886-residue protein sequence, read N- to C-terminus: Alanine--tRNA ligase (886 aa).

The Zn(2+) site is built by His564, His568, Cys666, and His670.

This sequence belongs to the class-II aminoacyl-tRNA synthetase family. The cofactor is Zn(2+).

The protein localises to the cytoplasm. The enzyme catalyses tRNA(Ala) + L-alanine + ATP = L-alanyl-tRNA(Ala) + AMP + diphosphate. Its function is as follows. Catalyzes the attachment of alanine to tRNA(Ala) in a two-step reaction: alanine is first activated by ATP to form Ala-AMP and then transferred to the acceptor end of tRNA(Ala). Also edits incorrectly charged Ser-tRNA(Ala) and Gly-tRNA(Ala) via its editing domain. In Prochlorococcus marinus (strain MIT 9515), this protein is Alanine--tRNA ligase.